The primary structure comprises 62 residues: UPF0291 protein CLM_2971 (62 aa).

This sequence belongs to the UPF0291 family.

It is found in the cytoplasm. This is UPF0291 protein CLM_2971 from Clostridium botulinum (strain Kyoto / Type A2).